We begin with the raw amino-acid sequence, 246 residues long: Glandular kallikrein (246 aa).

The propeptide occupies 1–7; sequence APPIQSR. A Peptidase S1 domain is found at 8–243; the sequence is IIGGRECEKN…YLDWINDTIT (236 aa). 5 cysteine pairs are disulfide-bonded: Cys-14-Cys-158, Cys-33-Cys-49, Cys-135-Cys-204, Cys-169-Cys-183, and Cys-194-Cys-219. His-48 (charge relay system) is an active-site residue. The N-linked (GlcNAc...) asparagine glycan is linked to Asn-85. Residues 85 to 104 form a kallikrein (autolysis) loop region; sequence NLSLLKXHTKADGKDYSHDL. Asp-103 functions as the Charge relay system in the catalytic mechanism. Residue Ser-198 is the Charge relay system of the active site. Residue Asn-239 is glycosylated (N-linked (GlcNAc...) asparagine).

Belongs to the peptidase S1 family. Kallikrein subfamily. In terms of assembly, monomer.

The enzyme catalyses Preferential cleavage of Arg-|-Xaa bonds in small molecule substrates. Highly selective action to release kallidin (lysyl-bradykinin) from kininogen involves hydrolysis of Met-|-Xaa or Leu-|-Xaa.. Glandular kallikreins cleave Met-Lys and Arg-Ser bonds in kininogen to release Lys-bradykinin. In Sus scrofa (Pig), this protein is Glandular kallikrein.